We begin with the raw amino-acid sequence, 431 residues long: Trigger factor (431 aa).

The PPIase FKBP-type domain maps to 163-248 (GDTVVIDYAG…IHEVKGKELP (86 aa)).

It belongs to the FKBP-type PPIase family. Tig subfamily.

It is found in the cytoplasm. It carries out the reaction [protein]-peptidylproline (omega=180) = [protein]-peptidylproline (omega=0). Involved in protein export. Acts as a chaperone by maintaining the newly synthesized protein in an open conformation. Functions as a peptidyl-prolyl cis-trans isomerase. This chain is Trigger factor, found in Latilactobacillus sakei subsp. sakei (strain 23K) (Lactobacillus sakei subsp. sakei).